The sequence spans 227 residues: Uracil-DNA glycosylase (227 aa).

The Proton acceptor role is filled by D65.

Belongs to the uracil-DNA glycosylase (UDG) superfamily. UNG family.

The protein localises to the cytoplasm. The catalysed reaction is Hydrolyzes single-stranded DNA or mismatched double-stranded DNA and polynucleotides, releasing free uracil.. In terms of biological role, excises uracil residues from the DNA which can arise as a result of misincorporation of dUMP residues by DNA polymerase or due to deamination of cytosine. The polypeptide is Uracil-DNA glycosylase (Buchnera aphidicola subsp. Cinara cedri (strain Cc)).